Consider the following 858-residue polypeptide: MLRTKDLIWTLFFLGTAVSLQVDIVPSQGEISVGESKFFLCQVAGDAKDKDISWFSPNGEKLSPNQQRISVVWNDDDSSTLTIYNANIDDAGIYKCVVTAEDGTQSEATVNVKIFQKLMFKNAPTPQEFKEGEDAVIVCDVVSSLPPTIIWKHKGRDVILKKDVRFIVLSNNYLQIRGIKKTDEGTYRCEGRILARGEINFKDIQVIVNVPPTVQARQSIVNATANLGQSVTLVCDADGFPEPTMSWTKDGEPIENEEEDDEKHIFSDDSSELTIRNVDKNDEAEYVCIAENKAGEQDASIHLKVFAKPKITYVENQTAMELEEQVTLTCEASGDPIPSITWRTSTRNISSEEKASWTRPEKQETLDGHMVVRSHARVSSLTLKSIQYTDAGEYICTASNTIGQDSQSMYLEVQYAPKLQGPVAVYTWEGNQVNITCEVFAYPSATISWFRDGQLLPSSNYSNIKIYNTPSASYLEVTPDSENDFGNYNCTAVNRIGQESLEFILVQADTPSSPSIDRVEPYSSTAQVQFDEPEATGGVPILKYKAEWKSLGEEAWHSKWYDAKEANMEGIVTIMGLKPETRYAVRLAALNGKGLGEISAATEFKTQPVREPSAPKLEGQMGEDGNSIKVNLIKQDDGGSPIRHYLVKYRALASEWKPEIRLPSGSDHVMLKSLDWNAEYEVYVVAENQQGKSKAAHFVFRTSAQPTAIPANGSPTAGLSTGAIVGILIVIFVLLLVVMDITCYFLNKCGLLMCIAVNLCGKAGPGAKGKDMEEGKAAFSKDESKEPIVEVRTEEERTPNHDGGKHTEPNETTPLTEPEKGPVETKSEPQESEAKPAPTEVKTVPNEATQTKENESKA.

Residues 1–19 form the signal peptide; sequence MLRTKDLIWTLFFLGTAVS. 5 consecutive Ig-like C2-type domains span residues 20–111, 116–205, 212–302, 309–414, and 417–502; these read LQVD…ATVN, QKLM…KDIQ, PTVQ…ASIH, PKIT…LEVQ, and PKLQ…ESLE. At 20-721 the chain is on the extracellular side; the sequence is LQVDIVPSQG…NGSPTAGLST (702 aa). Intrachain disulfides connect C41–C96 and C139–C189. Heparin contacts are provided by residues 152–156 and 161–165; these read KHKGR and KKDVR. N-linked (GlcNAc...) asparagine glycosylation occurs at N222. C235 and C288 are joined by a disulfide. Residues N316, N348, N434, N460, and N489 are each glycosylated (N-linked (GlcNAc...) asparagine). Residues C330 and C396 are joined by a disulfide bond. C437 and C490 are disulfide-bonded. 2 consecutive Fibronectin type-III domains span residues 510–609 and 611–706; these read TPSS…TQPV and EPSA…SAQP. A helical transmembrane segment spans residues 722-739; it reads GAIVGILIVIFVLLLVVM. Topologically, residues 740–858 are cytoplasmic; it reads DITCYFLNKC…TQTKENESKA (119 aa). Residues 765–858 are disordered; that stretch reads PGAKGKDMEE…TQTKENESKA (94 aa). 2 stretches are compositionally biased toward basic and acidic residues: residues 768–809 and 817–834; these read KGKD…HTEP and EPEK…ESEA. 2 positions are modified to phosphoserine: S780 and S784.

In terms of assembly, interacts with MDK. Found in a complex with SLC39A6, SLC39A10 and with NCAM1; this complex controls NCAM1 phosphorylation and integration into focal adhesion complexes during epithelial-tomesenchymal transition. Interacts with synaptic plasticity regulator PANTS. Polysialylated by ST8SIA2 and ST8SIA4. Polysialylation modulates cell interactions by confering both attractive and repulsive properties that are highly regulated by ST8SIA2 and ST8SIA4. Polysialylation is formed on a-2,3-linked sialic acid of core glycans.

It is found in the cell membrane. Its function is as follows. This protein is a cell adhesion molecule involved in neuron-neuron adhesion, neurite fasciculation, outgrowth of neurites, etc. In Rattus norvegicus (Rat), this protein is Neural cell adhesion molecule 1.